The primary structure comprises 1194 residues: Metabotropic glutamate receptor 1 (1194 aa).

Positions 1-18 (MVGLLLFFFPAIFLEVSL) are cleaved as a signal peptide. Over 19 to 592 (LPRSPGRKVL…VRYLEWSNIE (574 aa)) the chain is Extracellular. The cysteines at positions 67 and 109 are disulfide-linked. Tyr-74 provides a ligand contact to L-glutamate. N-linked (GlcNAc...) asparagine glycosylation occurs at Asn-98. Residues Ser-165 and 186-188 (SAT) contribute to the L-glutamate site. Asn-223 carries N-linked (GlcNAc...) asparagine glycosylation. Tyr-236 serves as a coordination point for L-glutamate. A disulfide bond links Cys-289 and Cys-291. Asp-318 serves as a coordination point for L-glutamate. Cys-378 and Cys-394 are oxidised to a cystine. The N-linked (GlcNAc...) asparagine glycan is linked to Asn-397. Lys-409 contacts L-glutamate. Cys-432 and Cys-439 are disulfide-bonded. Asn-515 carries an N-linked (GlcNAc...) asparagine glycan. The chain crosses the membrane as a helical span at residues 593–615 (SIIAIAFSCLGILVTLFVTLIFV). At 616–629 (LYRDTPVVKSSSRE) the chain is on the cytoplasmic side. The chain crosses the membrane as a helical span at residues 630 to 650 (LCYIILAGIFLGYVCPFTLIA). Residues 651-658 (KPTTTSCY) are Extracellular-facing. Cys-657 and Cys-746 are oxidised to a cystine. The chain crosses the membrane as a helical span at residues 659-680 (LQRLLVGLSSAMCYSALVTKTN). Residues 681–703 (RIARILAGSKKKICTRKPRFMSA) are Cytoplasmic-facing. Residues 704-727 (WAQVIIASILISVQLTLVVTLIIM) traverse the membrane as a helical segment. The Extracellular portion of the chain corresponds to 728-750 (EPPMPILSYPSIKEVYLICNTSN). A helical membrane pass occupies residues 751-772 (LGVVAPLGYNGLLIMSCTYYAF). At 773–785 (KTRNVPANFNEAK) the chain is on the cytoplasmic side. Residues 786 to 807 (YIAFTMYTTCIIWLAFVPIYFG) traverse the membrane as a helical segment. The Extracellular segment spans residues 808–815 (SNYKIITT). Residues 816-840 (CFAVSLSVTVALGCMFTPKMYIIIA) form a helical membrane-spanning segment. Topologically, residues 841–1194 (KPERNVRSAF…RDYKQSSSTL (354 aa)) are cytoplasmic. Ser-853 carries the post-translational modification Phosphoserine. Residue Thr-871 is modified to Phosphothreonine. Positions 883-905 (AGNANSNGKSVSWSEPGGGQVPK) are disordered. A compositionally biased stretch (polar residues) spans 885-895 (NANSNGKSVSW). 2 positions are modified to phosphoserine: Ser-894 and Ser-969. The tract at residues 1007–1030 (PALPKGLPPPLQQQQQPPPQQKSL) is disordered. Pro residues predominate over residues 1012 to 1026 (GLPPPLQQQQQPPPQ). The residue at position 1091 (Ser-1091) is a Phosphoserine. The disordered stretch occupies residues 1113-1173 (HEREGNTEED…SPVSESVLCT (61 aa)). A compositionally biased stretch (acidic residues) spans 1119–1131 (TEEDELEEEEEDL). Phosphoserine is present on Ser-1142. Thr-1146 carries the post-translational modification Phosphothreonine. Ser-1149 carries the phosphoserine modification. The span at 1154 to 1170 (SVASGSSVPSSPVSESV) shows a compositional bias: low complexity.

It belongs to the G-protein coupled receptor 3 family. In terms of assembly, homodimer; disulfide-linked. The PPXXF motif binds HOMER1, HOMER2 and HOMER3. Interacts with TAMALIN. Interacts with RYR1, RYR2, ITPR1, SHANK1 and SHANK3. Interacts with SIAH1. In terms of tissue distribution, detected in brain.

Its subcellular location is the cell membrane. The protein resides in the postsynaptic cell membrane. It localises to the cell projection. It is found in the dendrite. Its activity is regulated as follows. Signaling is inhibited by the antagonist LY341495. The LY341495 binding site partially overlaps with the glutamate binding site. Signaling is also inhibited by synthetic allosteric regulators, such as FITM (4-fluoro-N-(4-(6-(isopropylamino)pyrimidin-4-yl)thiazol-2-yl)-N-methylbenzamide) that bind in a pocket between the transmembrane helices. Its function is as follows. G-protein coupled receptor for glutamate. Ligand binding causes a conformation change that triggers signaling via guanine nucleotide-binding proteins (G proteins) and modulates the activity of down-stream effectors. Signaling activates a phosphatidylinositol-calcium second messenger system. May participate in the central action of glutamate in the CNS, such as long-term potentiation in the hippocampus and long-term depression in the cerebellum. May function in the light response in the retina. Induces GRID1 and GRID2 cation-channel activation via GNAQ-PLC-PKC pathway in dopaminergic neurons and cerebellar Purkinje cell, respectively. The polypeptide is Metabotropic glutamate receptor 1 (GRM1) (Homo sapiens (Human)).